Consider the following 109-residue polypeptide: Flagellar transcriptional regulator FlhD (109 aa).

It belongs to the FlhD family. As to quaternary structure, homodimer; disulfide-linked. Forms a heterohexamer composed of two FlhC and four FlhD subunits. Each FlhC binds a FlhD dimer, forming a heterotrimer, and a hexamer assembles by dimerization of two heterotrimers.

The protein resides in the cytoplasm. Functionally, functions in complex with FlhC as a master transcriptional regulator that regulates transcription of several flagellar and non-flagellar operons by binding to their promoter region. Activates expression of class 2 flagellar genes, including fliA, which is a flagellum-specific sigma factor that turns on the class 3 genes. Also regulates genes whose products function in a variety of physiological pathways. The sequence is that of Flagellar transcriptional regulator FlhD from Acidovorax sp. (strain JS42).